Consider the following 195-residue polypeptide: Cysteine/O-acetylserine efflux protein (195 aa).

The Periplasmic segment spans residues 1 to 7; the sequence is MTPTLLS. Residues 8-28 form a helical membrane-spanning segment; the sequence is AFWTYTLITAMTPGPNNILAL. Residues 29-46 lie on the Cytoplasmic side of the membrane; sequence SSATSHGFRQSTRVLAGM. A helical membrane pass occupies residues 47–67; it reads SLGFLIVMLLCAGISFSLAVI. At 68–69 the chain is on the periplasmic side; sequence DP. Residues 70 to 90 form a helical membrane-spanning segment; it reads AAVHLLSWAGAAYIVWLAWKI. Residues 91–104 are Cytoplasmic-facing; that stretch reads ATSPTKEDGLQAKP. A helical membrane pass occupies residues 105–125; that stretch reads ISFWASFALQFVNVKIILYGV. Residues 126-141 are Periplasmic-facing; that stretch reads TALSTFVLPQTQALSW. A helical membrane pass occupies residues 142-162; the sequence is VVGVSVLLAMIGTFGNVCWAL. Topologically, residues 163 to 176 are cytoplasmic; that stretch reads AGHLFQRLFRQYGR. Residues 177 to 194 form a helical membrane-spanning segment; that stretch reads QLNIVLALLLIYCAVRIF. Position 195 (Tyr-195) is a topological domain, periplasmic.

The protein belongs to the Rht family.

The protein resides in the cell inner membrane. The enzyme catalyses O-acetyl-L-serine(in) = O-acetyl-L-serine(out). It carries out the reaction L-cysteine(in) = L-cysteine(out). In terms of biological role, exporter of O-acetylserine (OAS) and cysteine. This is Cysteine/O-acetylserine efflux protein (eamB) from Escherichia coli O139:H28 (strain E24377A / ETEC).